The sequence spans 152 residues: Ribosome maturation factor RimP (152 aa).

The protein belongs to the RimP family.

Its subcellular location is the cytoplasm. In terms of biological role, required for maturation of 30S ribosomal subunits. In Porphyromonas gingivalis (strain ATCC BAA-308 / W83), this protein is Ribosome maturation factor RimP.